A 205-amino-acid chain; its full sequence is 3-demethoxyubiquinol 3-hydroxylase (205 aa).

Fe cation is bound by residues glutamate 54, glutamate 84, histidine 87, glutamate 136, glutamate 168, and histidine 171.

Belongs to the COQ7 family. Fe cation serves as cofactor.

It localises to the cell membrane. It catalyses the reaction a 5-methoxy-2-methyl-3-(all-trans-polyprenyl)benzene-1,4-diol + AH2 + O2 = a 3-demethylubiquinol + A + H2O. Its pathway is cofactor biosynthesis; ubiquinone biosynthesis. In terms of biological role, catalyzes the hydroxylation of 2-nonaprenyl-3-methyl-6-methoxy-1,4-benzoquinol during ubiquinone biosynthesis. The sequence is that of 3-demethoxyubiquinol 3-hydroxylase from Paracidovorax citrulli (strain AAC00-1) (Acidovorax citrulli).